The primary structure comprises 1200 residues: DNA polymerase subunit gamma-1 (1200 aa).

Disordered stretches follow at residues 471–515 (QKKT…RPSM) and 667–688 (MDLSSEVPATAKAKKRNNSSEH). Basic residues predominate over residues 472–481 (KKTKISKKQK). Over residues 494–512 (LVEDHNEDPGPPTEKEESR) the composition is skewed to basic and acidic residues.

Belongs to the DNA polymerase type-A family. As to quaternary structure, heterotrimer composed of a catalytic subunit and a homodimer of accessory subunits. Mg(2+) serves as cofactor.

It localises to the mitochondrion. The protein localises to the mitochondrion matrix. Its subcellular location is the mitochondrion nucleoid. The catalysed reaction is DNA(n) + a 2'-deoxyribonucleoside 5'-triphosphate = DNA(n+1) + diphosphate. Involved in the replication of mitochondrial DNA. Associates with mitochondrial DNA. The chain is DNA polymerase subunit gamma-1 (polg) from Xenopus laevis (African clawed frog).